The sequence spans 356 residues: Glucose 1-dehydrogenase 2 (356 aa).

Residue D38 participates in Zn(2+) binding. S40 serves as a coordination point for substrate. Zn(2+)-binding residues include H64 and E65. 2 residues coordinate substrate: E114 and E150. E150 is a Zn(2+) binding site. Residues 181–184 (NGNL), 206–207 (RR), and 301–303 (VVN) contribute to the NADP(+) site. Residue N303 coordinates substrate.

Belongs to the zinc-containing alcohol dehydrogenase family. Glucose 1-dehydrogenase subfamily. Zn(2+) is required as a cofactor.

It carries out the reaction D-glucose + NAD(+) = D-glucono-1,5-lactone + NADH + H(+). It catalyses the reaction D-glucose + NADP(+) = D-glucono-1,5-lactone + NADPH + H(+). In terms of biological role, catalyzes the NAD(P)(+)-dependent oxidation of D-glucose to D-gluconate via gluconolactone. Can utilize both NAD(+) and NADP(+) as electron acceptor. Is involved in the degradation of glucose through a modified Entner-Doudoroff pathway. This is Glucose 1-dehydrogenase 2 from Haloterrigena turkmenica (strain ATCC 51198 / DSM 5511 / JCM 9101 / NCIMB 13204 / VKM B-1734 / 4k) (Halococcus turkmenicus).